The following is a 269-amino-acid chain: MPELPEVEVTRLGITPHVLHQTVTDIVIRNGRLRWPIPDDINQIKQQPITKVRRRAKYLLLDTPVGSAIVHLGMSGSLRVLPAGTAPEKHDHVDLALSSGEILRYNDPRRFGAWLWQPVDTKHHVLAKLGPEPLTDVFTADYLQQKAKGKRTAIKQFIMDNHIVVGVGNIYANESLFSAGIHPQKAAGEVTPQALTVLVDEIKAVLAFAIQQGGTTLKDFKNADGKPGYFAQELQVYGKGGLPCPKCGTELAEVKIGQRATVYCSQCQQ.

Residue Pro2 is the Schiff-base intermediate with DNA of the active site. Glu3 functions as the Proton donor in the catalytic mechanism. The Proton donor; for beta-elimination activity role is filled by Lys57. DNA is bound by residues His90, Arg109, and Lys150. The FPG-type zinc-finger motif lies at Gln235 to Gln269. The active-site Proton donor; for delta-elimination activity is Arg259.

The protein belongs to the FPG family. Monomer. It depends on Zn(2+) as a cofactor.

It catalyses the reaction Hydrolysis of DNA containing ring-opened 7-methylguanine residues, releasing 2,6-diamino-4-hydroxy-5-(N-methyl)formamidopyrimidine.. The catalysed reaction is 2'-deoxyribonucleotide-(2'-deoxyribose 5'-phosphate)-2'-deoxyribonucleotide-DNA = a 3'-end 2'-deoxyribonucleotide-(2,3-dehydro-2,3-deoxyribose 5'-phosphate)-DNA + a 5'-end 5'-phospho-2'-deoxyribonucleoside-DNA + H(+). In terms of biological role, involved in base excision repair of DNA damaged by oxidation or by mutagenic agents. Acts as a DNA glycosylase that recognizes and removes damaged bases. Has a preference for oxidized purines, such as 7,8-dihydro-8-oxoguanine (8-oxoG). Has AP (apurinic/apyrimidinic) lyase activity and introduces nicks in the DNA strand. Cleaves the DNA backbone by beta-delta elimination to generate a single-strand break at the site of the removed base with both 3'- and 5'-phosphates. The sequence is that of Formamidopyrimidine-DNA glycosylase from Photobacterium damsela subsp. piscicida (Pasteurella piscicida).